Reading from the N-terminus, the 694-residue chain is Ferric reductase transmembrane component 5 (694 aa).

The signal sequence occupies residues methionine 1–alanine 19. Over lysine 20 to tyrosine 163 the chain is Extracellular. N-linked (GlcNAc...) asparagine glycosylation occurs at asparagine 117. Residues glycine 164–leucine 184 form a helical membrane-spanning segment. Over asparagine 185–tryptophan 222 the chain is Cytoplasmic. A helical membrane pass occupies residues phenylalanine 223–leucine 243. Over histidine 244–leucine 267 the chain is Extracellular. A helical membrane pass occupies residues isoleucine 268 to phenylalanine 288. The Ferric oxidoreductase domain maps to alanine 274–alanine 408. Residues glycine 289 to lysine 311 lie on the Cytoplasmic side of the membrane. Positions 310 and 324 each coordinate heme. A helical transmembrane segment spans residues tryptophan 312–isoleucine 334. The Extracellular portion of the chain corresponds to glutamate 335 to tryptophan 347. Residues threonine 348–phenylalanine 368 form a helical membrane-spanning segment. The Cytoplasmic portion of the chain corresponds to arginine 369–histidine 371. Residues tyrosine 372–tryptophan 392 form a helical membrane-spanning segment. Heme-binding residues include histidine 380 and histidine 394. At lysine 393–tryptophan 403 the chain is on the extracellular side. A helical transmembrane segment spans residues isoleucine 404–isoleucine 424. Residues leucine 409–threonine 528 enclose the FAD-binding FR-type domain. Residues phenylalanine 425–tryptophan 694 lie on the Cytoplasmic side of the membrane. An FAD-binding site is contributed by histidine 473–aspartate 479. NADP(+) is bound by residues glycine 520–glycine 523 and cysteine 660–glycine 661.

Belongs to the ferric reductase (FRE) family. FAD serves as cofactor.

It localises to the cell membrane. The enzyme catalyses 2 a Fe(II)-siderophore + NADP(+) + H(+) = 2 a Fe(III)-siderophore + NADPH. Its function is as follows. Metalloreductase responsible for reducing extracellular iron and copper prior to import. Catalyzes the reductive uptake of Fe(3+)-salts and Fe(3+) bound to catecholate or hydroxamate siderophores. Fe(3+) is reduced to Fe(2+), which then dissociates from the siderophore and can be imported by the high-affinity Fe(2+) transport complex in the plasma membrane. This Saccharomyces cerevisiae (strain ATCC 204508 / S288c) (Baker's yeast) protein is Ferric reductase transmembrane component 5 (FRE5).